The primary structure comprises 103 residues: Co-chaperonin GroES (103 aa).

Belongs to the GroES chaperonin family. Heptamer of 7 subunits arranged in a ring. Interacts with the chaperonin GroEL.

It is found in the plastid. Its subcellular location is the cyanelle. Its function is as follows. Together with the chaperonin GroEL, plays an essential role in assisting protein folding. The GroEL-GroES system forms a nano-cage that allows encapsulation of the non-native substrate proteins and provides a physical environment optimized to promote and accelerate protein folding. GroES binds to the apical surface of the GroEL ring, thereby capping the opening of the GroEL channel. The protein is Co-chaperonin GroES of Cyanophora paradoxa.